Reading from the N-terminus, the 129-residue chain is Small ribosomal subunit protein uS8 (129 aa).

This sequence belongs to the universal ribosomal protein uS8 family. Part of the 30S ribosomal subunit. Contacts proteins S5 and S12.

In terms of biological role, one of the primary rRNA binding proteins, it binds directly to 16S rRNA central domain where it helps coordinate assembly of the platform of the 30S subunit. The sequence is that of Small ribosomal subunit protein uS8 from Bdellovibrio bacteriovorus (strain ATCC 15356 / DSM 50701 / NCIMB 9529 / HD100).